Here is a 460-residue protein sequence, read N- to C-terminus: CCA-adding enzyme (460 aa).

Residues Ser-50 and Arg-53 each coordinate ATP. The CTP site is built by Ser-50 and Arg-53. 3 residues coordinate Mg(2+): Asp-62, Asp-64, and Asp-117. ATP is bound by residues His-140, Lys-159, and Tyr-168. Positions 140, 159, and 168 each coordinate CTP.

It belongs to the tRNA nucleotidyltransferase/poly(A) polymerase family. Archaeal CCA-adding enzyme subfamily. Homodimer. It depends on Mg(2+) as a cofactor.

It catalyses the reaction a tRNA precursor + 2 CTP + ATP = a tRNA with a 3' CCA end + 3 diphosphate. The catalysed reaction is a tRNA with a 3' CCA end + 2 CTP + ATP = a tRNA with a 3' CCACCA end + 3 diphosphate. In terms of biological role, catalyzes the addition and repair of the essential 3'-terminal CCA sequence in tRNAs without using a nucleic acid template. Adds these three nucleotides in the order of C, C, and A to the tRNA nucleotide-73, using CTP and ATP as substrates and producing inorganic pyrophosphate. tRNA 3'-terminal CCA addition is required both for tRNA processing and repair. Also involved in tRNA surveillance by mediating tandem CCA addition to generate a CCACCA at the 3' terminus of unstable tRNAs. While stable tRNAs receive only 3'-terminal CCA, unstable tRNAs are marked with CCACCA and rapidly degraded. The sequence is that of CCA-adding enzyme from Methanoregula boonei (strain DSM 21154 / JCM 14090 / 6A8).